A 294-amino-acid polypeptide reads, in one-letter code: UPF0718 protein YcgR (294 aa).

8 helical membrane passes run 15-35 (ISILIEAIPFILIGVILSGII), 54-74 (LAVLFGALAGVLFPACECGII), 92-112 (AFMLTAPIINPIVLFSTYIAF), 117-137 (SVVFYRGGLALAVSLIIGVIL), 174-194 (IDEFFSVGKYLIIGAFIAAAM), 215-235 (LVMMGLAFVLSLCSEVDAFIA), 247-267 (LIAFLVFGAMVDIKNLLMMLA), and 273-293 (FVFLLITYIVVIVLAGSLLVK).

It belongs to the UPF0718 family.

The protein resides in the cell membrane. This chain is UPF0718 protein YcgR (ycgR), found in Bacillus subtilis (strain 168).